The following is a 609-amino-acid chain: PTS system beta-glucoside-specific EIIBCA component (609 aa).

Residues 1 to 86 enclose the PTS EIIB type-1 domain; that stretch reads MDYDKLSKDI…VRHSNLSDEK (86 aa). Cys26 functions as the Phosphocysteine intermediate; for EIIB activity in the catalytic mechanism. One can recognise a PTS EIIC type-1 domain in the interval 103–459; sequence DVISGVFTPI…GSQQPAVHEG (357 aa). Helical transmembrane passes span 112–132, 141–161, 174–194, 202–222, 246–266, 281–301, 321–341, 351–371, 379–399, and 412–432; these read ILPAIAGAGMIKGLVALAVTF, VHVILTAVGDGAFYFLPLLLA, VAAAIAAAILHPDLTALLGAG, LPVTAATYSSTVIPILLSIWI, FTLLIVVPLTLITVGPLGAIL, AGLVAMILLAGTFSLIIMTGM, LLPAMFLANMGQAGASFAVFL, LALTTSITALMGITEPAMYGV, FAAALIGGAAGGAFYGMTGVA, and IPVFIGPTFIYAMIGLVIAFA. A PTS EIIA type-1 domain is found at 480 to 584; the sequence is DGVFSAGVMG…DVITPVIVTN (105 aa). His532 acts as the Tele-phosphohistidine intermediate; for EIIA activity in catalysis.

Its subcellular location is the cell membrane. Functionally, the phosphoenolpyruvate-dependent sugar phosphotransferase system (sugar PTS), a major carbohydrate active -transport system, catalyzes the phosphorylation of incoming sugar substrates concomitantly with their translocation across the cell membrane. This system is involved in beta-glucoside transport. This is PTS system beta-glucoside-specific EIIBCA component (bglP) from Bacillus subtilis (strain 168).